The sequence spans 68 residues: Antimicrobial peptide UyCT5 (68 aa).

Residues 1–23 form the signal peptide; it reads MKNQFAILLLAVVFLQLISQSDA. Leucine amide is present on L36. A propeptide spanning residues 40 to 68 is cleaved from the precursor; the sequence is GLKNADRLDELFDGDISDADLDFLRELMR.

Belongs to the non-disulfide-bridged peptide (NDBP) superfamily. Short antimicrobial peptide (group 4) family. Expressed by the venom gland.

The protein localises to the secreted. The protein resides in the target cell membrane. Antimicrobial peptide that inhibits the growth of Gram-positive (S.aureus, MIC=1 uM) and Gram-negative bacteria (E.coli, MIC=15 uM and P.aeruginosa, MIC=2 uM). It also shows 37% of hemolysis when 15 uM are tested (93% at 50 uM). The sequence is that of Antimicrobial peptide UyCT5 from Urodacus yaschenkoi (Inland robust scorpion).